A 150-amino-acid polypeptide reads, in one-letter code: 3-dehydroquinate dehydratase (150 aa).

Tyr22 acts as the Proton acceptor in catalysis. Residues Asn73, His79, and Asp86 each coordinate substrate. His99 (proton donor) is an active-site residue. Substrate contacts are provided by residues 100-101 (LS) and Arg110.

It belongs to the type-II 3-dehydroquinase family. As to quaternary structure, homododecamer.

The enzyme catalyses 3-dehydroquinate = 3-dehydroshikimate + H2O. The protein operates within metabolic intermediate biosynthesis; chorismate biosynthesis; chorismate from D-erythrose 4-phosphate and phosphoenolpyruvate: step 3/7. Functionally, catalyzes a trans-dehydration via an enolate intermediate. This chain is 3-dehydroquinate dehydratase, found in Dinoroseobacter shibae (strain DSM 16493 / NCIMB 14021 / DFL 12).